A 233-amino-acid chain; its full sequence is Small ribosomal subunit protein uS3 (233 aa).

In terms of domain architecture, KH type-2 spans 39–108 (IRTALFKLLK…KLIVNVRVIE (70 aa)).

The protein belongs to the universal ribosomal protein uS3 family. In terms of assembly, part of the 30S ribosomal subunit. Forms a tight complex with proteins S10 and S14.

Its function is as follows. Binds the lower part of the 30S subunit head. Binds mRNA in the 70S ribosome, positioning it for translation. In Mycoplasma mycoides subsp. mycoides SC (strain CCUG 32753 / NCTC 10114 / PG1), this protein is Small ribosomal subunit protein uS3.